The primary structure comprises 232 residues: MGQKVHPNGIRLGIVKPWNATWFANTKDFADNLDGDFKVRQFLTKELQKASLSRIVIERPAKSIRVTIHTARPGVVIGKKGEDVEKLRAAVAKIAGVPAQINIAEVRKPELDAQLVGDSIASQLERRVMFRRAMKRAVQNAMRLGAKGIKVEVSGRLGGAEIARSEWYREGRVPLHTLRADIDYATSSAHTQYGVIGIKTWIFKGEILGGMPAANAVEPKGDKPKKQRKGRK.

The KH type-2 domain occupies Val39–Arg107. The segment at Ala213–Lys232 is disordered.

The protein belongs to the universal ribosomal protein uS3 family. In terms of assembly, part of the 30S ribosomal subunit. Forms a tight complex with proteins S10 and S14.

Its function is as follows. Binds the lower part of the 30S subunit head. Binds mRNA in the 70S ribosome, positioning it for translation. The polypeptide is Small ribosomal subunit protein uS3 (Vibrio campbellii (strain ATCC BAA-1116)).